Here is a 1025-residue protein sequence, read N- to C-terminus: Multidrug resistance protein MdtC (1025 aa).

12 consecutive transmembrane segments (helical) span residues 3–23 (FFAL…AITL), 333–353 (EVEQ…FLFL), 360–380 (IIPA…MYLC), 387–407 (LSLM…IVVL), 431–451 (VGFT…PLLL), 463–483 (FAVT…TLTP), 528–548 (LVGM…ISIP), 853–873 (VILI…LYES), 875–895 (VHPL…LLAL), 897–917 (LFNA…IGIV), 953–973 (PIMM…LSGG), and 984–1004 (ITIV…TPVV).

Belongs to the resistance-nodulation-cell division (RND) (TC 2.A.6) family. MdtC subfamily. As to quaternary structure, part of a tripartite efflux system composed of MdtA, MdtB and MdtC. MdtC forms a heteromultimer with MdtB.

It localises to the cell inner membrane. Its function is as follows. The MdtABC tripartite complex confers resistance against novobiocin and deoxycholate. The sequence is that of Multidrug resistance protein MdtC from Escherichia coli O157:H7 (strain EC4115 / EHEC).